A 199-amino-acid polypeptide reads, in one-letter code: Probable GTP-binding protein EngB (199 aa).

The region spanning 28–199 (DLPEIALAGR…DSWDAILEQV (172 aa)) is the EngB-type G domain. Residues 36-43 (GRSNVGKS), 63-67 (GKTQL), 81-84 (DVPG), 148-151 (TKAD), and 180-182 (FSS) each bind GTP. Residues Ser-43 and Thr-65 each contribute to the Mg(2+) site.

It belongs to the TRAFAC class TrmE-Era-EngA-EngB-Septin-like GTPase superfamily. EngB GTPase family. It depends on Mg(2+) as a cofactor.

Necessary for normal cell division and for the maintenance of normal septation. The protein is Probable GTP-binding protein EngB of Streptococcus pyogenes serotype M3 (strain SSI-1).